The chain runs to 326 residues: MSAVLTAGGGLTAGDRSIITAINTGASSLSFVGSAFIVLCYCLFKELRKFSFKLVFYLALSDMLCSFFLIVGDPSKGFICYAQGYTTHFFCVASFLWTTTIAFTLHRTVVKHKTDVEDLEAMFHLYVWGTSLVVTVIRSFGNNHSHLGPWCWTQTGLKGKAVHFLTFYAPLWGAILYNGFTYFQVIRMLRNARRMAVGMSDRVDQFDNRAELKVLNRWGYYPLILIGSWAFGTINRIHDFIEPGHKIFWLSVLDVGTAALMGLFNSIAYGFNSSVRRAIHERLELFLPERLYRWLPSNFRPKNHLILHQQQQQRSEMVSLKTEDQQ.

The residue at position 2 (serine 2) is an N-acetylserine. Residues 2-23 (SAVLTAGGGLTAGDRSIITAIN) are Extracellular-facing. Residues 24–44 (TGASSLSFVGSAFIVLCYCLF) traverse the membrane as a helical segment. At 45–51 (KELRKFS) the chain is on the cytoplasmic side. Residues 52 to 72 (FKLVFYLALSDMLCSFFLIVG) traverse the membrane as a helical segment. Topologically, residues 73-84 (DPSKGFICYAQG) are extracellular. Cysteines 80 and 151 form a disulfide. Residues 85–105 (YTTHFFCVASFLWTTTIAFTL) traverse the membrane as a helical segment. Over 106 to 120 (HRTVVKHKTDVEDLE) the chain is Cytoplasmic. A helical transmembrane segment spans residues 121–141 (AMFHLYVWGTSLVVTVIRSFG). Over 142-160 (NNHSHLGPWCWTQTGLKGK) the chain is Extracellular. Residue asparagine 143 is glycosylated (N-linked (GlcNAc...) asparagine). Residues 161–181 (AVHFLTFYAPLWGAILYNGFT) form a helical membrane-spanning segment. Over 182–213 (YFQVIRMLRNARRMAVGMSDRVDQFDNRAELK) the chain is Cytoplasmic. A helical transmembrane segment spans residues 214-234 (VLNRWGYYPLILIGSWAFGTI). Topologically, residues 235–246 (NRIHDFIEPGHK) are extracellular. A helical membrane pass occupies residues 247–267 (IFWLSVLDVGTAALMGLFNSI). Residues 268–326 (AYGFNSSVRRAIHERLELFLPERLYRWLPSNFRPKNHLILHQQQQQRSEMVSLKTEDQQ) are Cytoplasmic-facing.

It belongs to the G-protein coupled receptor 2 family. As to quaternary structure, interacts with GPA1. Mostly present in the meristematic regions. Expressed at low levels in seedlings, vascular tissues of cotyledons, hypocotyl, and roots, stems, leaves, flowering buds and siliques. In dark-grown seedlings, localized in the cotyledons and the hook.

Its subcellular location is the cell membrane. Functionally, together with GPA1, may regulate the cell cycle via a signaling cascade that uses phosphatidylinositol-specific phospholipase C (PI-PLC) as an effector and inositol 1,4,5-trisphosphate(IP(3)) as a second messenger. Promotes PI-PLC activity and IP(3) accumulation. Involved in the blue light (BL) signaling. Together with GPA1 and ADT3, required for BL-mediated synthesis of phenylpyruvate and subsequently of phenylalanine (Phe), in etiolated seedlings. Probably involved in cytokinin signal transduction. Plays a positive role in gibberellin- (GA) and brassinosteroid- (BR) regulated seed germination, probably independently of a heterotrimeric G-protein. Mediates seed dormancy abolition, and promotes seed germination and flowering. The protein is G-protein coupled receptor 1 (GCR1) of Arabidopsis thaliana (Mouse-ear cress).